Reading from the N-terminus, the 165-residue chain is Nucleotide-binding protein Chy400_2003 (165 aa).

The protein belongs to the YajQ family.

Nucleotide-binding protein. In Chloroflexus aurantiacus (strain ATCC 29364 / DSM 637 / Y-400-fl), this protein is Nucleotide-binding protein Chy400_2003.